The chain runs to 473 residues: NAD-dependent protein deacetylase SRT1 (473 aa).

A Deacetylase sirtuin-type domain is found at 27-267 (SHLLQCKIEE…AGVMESLNMK (241 aa)). Residues 52 to 71 (GAGISTSCGIPDFRGPKGIW) and 114 to 117 (QNVD) contribute to the NAD(+) site. The Proton acceptor role is filled by histidine 134. Zn(2+) is bound by residues cysteine 142, cysteine 145, cysteine 167, and cysteine 172. NAD(+) is bound by residues 209–211 (GTS), 235–237 (NLQ), and valine 253. Residues 447-473 (LEGSGTSRKRSRTGKRKSKALAEETKA) are disordered. Residues 453-465 (SRKRSRTGKRKSK) are compositionally biased toward basic residues.

It belongs to the sirtuin family. Class IV subfamily. Binds to the promoter region of genes influenced by ethylene. Interacts with ENAP1; this interaction is enhanced in the presence of ethylene. It depends on Zn(2+) as a cofactor.

Its subcellular location is the nucleus. The catalysed reaction is N(6)-acetyl-L-lysyl-[protein] + NAD(+) + H2O = 2''-O-acetyl-ADP-D-ribose + nicotinamide + L-lysyl-[protein]. In terms of biological role, NAD-dependent protein deacetylase. Has deacetylase activity towards H3K9Ac. May have a function in the safeguard against genome instability and DNA damage to ensure plant cell growth. Involved in responses to ethylene leading to the transcriptional repression of some ethylene-responsive genes via the regulation of histone acetylation H3K9Ac. This Arabidopsis thaliana (Mouse-ear cress) protein is NAD-dependent protein deacetylase SRT1.